A 947-amino-acid chain; its full sequence is DEAD-box ATP-dependent RNA helicase 45 (947 aa).

Over residues 1–14 the composition is skewed to acidic residues; that stretch reads MEEEEVVVVVDEEE. 2 disordered regions span residues 1-132 and 159-221; these read MEEE…EDEI and SMPA…EEFM. 2 stretches are compositionally biased toward basic and acidic residues: residues 15 to 31 and 42 to 61; these read SERRRQKMIEEEKKRLD and KEWQEQKRLEEEEAKRREQE. Residues 62 to 82 show a composition bias toward low complexity; sequence AAAGAGTPAAAAGADGDSNAG. Composition is skewed to acidic residues over residues 88 to 108 and 196 to 219; these read DGEESDEEGYKEDSQNAEDDG and DDSDSDYDDDDDDEGGSKDEDDEE. The short motif at 285-313 is the Q motif element; that stretch reads KTWVQSGLTSKLLDTIKKLGFEKPMPIQA. Positions 316 to 494 constitute a Helicase ATP-binding domain; it reads LPIIMSGRDC…RKVLTKPVEI (179 aa). 329–336 contributes to the ATP binding site; the sequence is AKTGSGKT. A DEAD box motif is present at residues 442–445; sequence DEAD. One can recognise a Helicase C-terminal domain in the interval 479–647; the sequence is QVEILARKVL…AVPQDLKGLA (169 aa). The disordered stretch occupies residues 658-710; sequence TEQAHGTGYGGSGFKFNEEEDEARRSAKKAQAREYGYEEDKSDSDSDEEGGVR. The segment covering 697 to 706 has biased composition (acidic residues); it reads DKSDSDSDEE. The stretch at 854 to 879 forms a coiled coil; the sequence is TELSVKKAKSELKRVLEDCANHALNL.

This sequence belongs to the DEAD box helicase family. DDX46/PRP5 subfamily.

The enzyme catalyses ATP + H2O = ADP + phosphate + H(+). This Oryza sativa subsp. japonica (Rice) protein is DEAD-box ATP-dependent RNA helicase 45.